The chain runs to 114 residues: Superoxide dismutase [Cu-Zn] (114 aa).

Residues H37, H39, and H54 each contribute to the Cu cation site. The tract at residues 49–73 (MSSGPHYNPRNKEHGAPTDENRHLG) is disordered. Residues H54, H62, H71, and D74 each coordinate Zn(2+). The segment covering 58-73 (RNKEHGAPTDENRHLG) has biased composition (basic and acidic residues). Residue H111 coordinates Cu cation.

This sequence belongs to the Cu-Zn superoxide dismutase family. Homodimer. Cu cation serves as cofactor. It depends on Zn(2+) as a cofactor.

Its subcellular location is the cytoplasm. The catalysed reaction is 2 superoxide + 2 H(+) = H2O2 + O2. Destroys radicals which are normally produced within the cells and which are toxic to biological systems. This Drosophila madeirensis (Fruit fly) protein is Superoxide dismutase [Cu-Zn].